Consider the following 475-residue polypeptide: tRNA-2-methylthio-N(6)-dimethylallyladenosine synthase (475 aa).

An MTTase N-terminal domain is found at 3 to 120; it reads KKLHIKTWGC…LPEMIDQIKD (118 aa). [4Fe-4S] cluster is bound by residues C12, C49, C83, C157, C161, and C164. In terms of domain architecture, Radical SAM core spans 143–375; that stretch reads RAEGPSAFVS…QDRITQQAMR (233 aa). The region spanning 378-441 is the TRAM domain; sequence RQMVGTVQRI…TNSLRGVFIR (64 aa).

This sequence belongs to the methylthiotransferase family. MiaB subfamily. As to quaternary structure, monomer. The cofactor is [4Fe-4S] cluster.

It is found in the cytoplasm. It carries out the reaction N(6)-dimethylallyladenosine(37) in tRNA + (sulfur carrier)-SH + AH2 + 2 S-adenosyl-L-methionine = 2-methylsulfanyl-N(6)-dimethylallyladenosine(37) in tRNA + (sulfur carrier)-H + 5'-deoxyadenosine + L-methionine + A + S-adenosyl-L-homocysteine + 2 H(+). Functionally, catalyzes the methylthiolation of N6-(dimethylallyl)adenosine (i(6)A), leading to the formation of 2-methylthio-N6-(dimethylallyl)adenosine (ms(2)i(6)A) at position 37 in tRNAs that read codons beginning with uridine. The protein is tRNA-2-methylthio-N(6)-dimethylallyladenosine synthase of Shewanella pealeana (strain ATCC 700345 / ANG-SQ1).